A 651-amino-acid polypeptide reads, in one-letter code: L-aspartate oxidase, chloroplastic (651 aa).

A chloroplast-targeting transit peptide spans 1–74 (MAAHVSTGNI…PISETSKPIR (74 aa)). Residues 92–95 (SGVA), Lys-114, 121–128 (NTNYAQGG), and Asp-292 contribute to the FAD site. Catalysis depends on Arg-368, which acts as the Proton donor/acceptor. FAD is bound by residues Glu-453 and 469–470 (SL).

It belongs to the FAD-dependent oxidoreductase 2 family. NadB subfamily. Interacts in vitro with QS. FAD is required as a cofactor.

Its subcellular location is the plastid. The protein resides in the chloroplast. It carries out the reaction L-aspartate + O2 = iminosuccinate + H2O2. It functions in the pathway cofactor biosynthesis; NAD(+) biosynthesis; iminoaspartate from L-aspartate (oxidase route): step 1/1. Catalyzes the oxidation of L-aspartate to iminoaspartate. Can complement nadB-deficient E.coli mutant. Plays a role in stomatal immunity. The chain is L-aspartate oxidase, chloroplastic from Arabidopsis thaliana (Mouse-ear cress).